The following is a 411-amino-acid chain: Adenylosuccinate synthetase (411 aa).

GTP contacts are provided by residues 11 to 17 (GDEGKGK) and 39 to 41 (GHT). Residue Asp12 is the Proton acceptor of the active site. Mg(2+)-binding residues include Asp12 and Gly39. IMP contacts are provided by residues 12-15 (DEGK), 37-40 (NAGH), Thr121, Arg135, Gln215, Thr230, and Arg294. His40 serves as the catalytic Proton donor. 290–296 (TTTKRPR) contacts substrate. Residues Arg296, 322–324 (KLD), and 400–402 (STS) each bind GTP.

This sequence belongs to the adenylosuccinate synthetase family. In terms of assembly, homodimer. It depends on Mg(2+) as a cofactor.

Its subcellular location is the cytoplasm. It carries out the reaction IMP + L-aspartate + GTP = N(6)-(1,2-dicarboxyethyl)-AMP + GDP + phosphate + 2 H(+). The protein operates within purine metabolism; AMP biosynthesis via de novo pathway; AMP from IMP: step 1/2. In terms of biological role, plays an important role in the de novo pathway of purine nucleotide biosynthesis. Catalyzes the first committed step in the biosynthesis of AMP from IMP. The sequence is that of Adenylosuccinate synthetase from Helicobacter pylori (strain P12).